Here is a 317-residue protein sequence, read N- to C-terminus: Olfactory receptor 6P1 (317 aa).

At 1-25 (MRNLSGGHVEEFVLVGFPTTPPLQL) the chain is on the extracellular side. A glycan (N-linked (GlcNAc...) asparagine) is linked at Asn3. A helical transmembrane segment spans residues 26-46 (LLFVLFFAIYLLTLLENALIV). At 47-54 (FTIWLAPS) the chain is on the cytoplasmic side. The helical transmembrane segment at 55–75 (LHRPMYFFLGHLSFLELWYIN) threads the bilayer. Over 76–99 (VTIPRLLAAFLTQDGRVSYVGCMT) the chain is Extracellular. A disulfide bridge links Cys97 with Cys189. A helical membrane pass occupies residues 100–120 (QLYFFIALACTECVLLAVMAY). Residues 121–139 (DRYLAICGPLLYPSLMPSS) lie on the Cytoplasmic side of the membrane. A helical transmembrane segment spans residues 140-160 (LATRLAAASWGSGFFSSMMKL). The Extracellular portion of the chain corresponds to 161 to 197 (LFISQLSYCGPNIINHFFCDISPLLNLTCSDKEQAEL). Asn186 carries an N-linked (GlcNAc...) asparagine glycan. The chain crosses the membrane as a helical span at residues 198–217 (VDFLLALVMILLPLLAVVSS). Topologically, residues 218 to 237 (YTAIIAAILRIPTSRGRHKA) are cytoplasmic. A helical transmembrane segment spans residues 238 to 258 (FSTCAAHLAVVVIYYSSTLFT). The Extracellular segment spans residues 259–271 (YARPRAMYTFNHN). The chain crosses the membrane as a helical span at residues 272–292 (KIISVLYTIIVPFFNPAIYCL). The Cytoplasmic segment spans residues 293–317 (RNKEVKEAFRKTVMGRCHYPRDVQD).

This sequence belongs to the G-protein coupled receptor 1 family.

The protein localises to the cell membrane. Odorant receptor. This Homo sapiens (Human) protein is Olfactory receptor 6P1 (OR6P1).